A 192-amino-acid polypeptide reads, in one-letter code: Guanylate kinase (192 aa).

The Guanylate kinase-like domain maps to 7 to 185 (GLIIILSSPS…TLKKIHEIIV (179 aa)). An ATP-binding site is contributed by 14 to 21 (SPSGTGKS).

It belongs to the guanylate kinase family.

Its subcellular location is the cytoplasm. It carries out the reaction GMP + ATP = GDP + ADP. In terms of biological role, essential for recycling GMP and indirectly, cGMP. The chain is Guanylate kinase from Rickettsia felis (strain ATCC VR-1525 / URRWXCal2) (Rickettsia azadi).